We begin with the raw amino-acid sequence, 68 residues long: MRAVTRNKIVNNLYFSTFLIAFASVAIGSVLPCPAHSVDSDSPAVQQHKLQLAHEQELKRKDALSKKI.

The protein belongs to the COA2 family.

It localises to the mitochondrion inner membrane. Required for efficient assembly of cytochrome c oxidase in the mitochondrial inner membrane. Seems to be involved in the SHY1-mediated step of cytochrome c oxidase maturation. May aid in stabilizing an early COX1 intermediate containing the nuclear subunits COX5A and COX6. The protein is Cytochrome c oxidase assembly factor 2 (COA2) of Saccharomyces cerevisiae (strain ATCC 204508 / S288c) (Baker's yeast).